The chain runs to 76 residues: UPF0291 protein BC_1827 (76 aa).

Belongs to the UPF0291 family.

It localises to the cytoplasm. This is UPF0291 protein BC_1827 from Bacillus cereus (strain ATCC 14579 / DSM 31 / CCUG 7414 / JCM 2152 / NBRC 15305 / NCIMB 9373 / NCTC 2599 / NRRL B-3711).